A 257-amino-acid chain; its full sequence is Receptor expression-enhancing protein 4 (257 aa).

2 consecutive transmembrane segments (helical) span residues 1–21 (MVSW…CPAY) and 42–62 (WIVF…ISWF). Phosphoserine occurs at positions 152 and 194. The disordered stretch occupies residues 183 to 257 (PIGYRAGGLQ…KKTVPSDVDS (75 aa)). Thr196 carries the phosphothreonine modification. At Ser202 the chain carries Phosphoserine. Phosphothreonine is present on Thr250. Ser253 carries the post-translational modification Phosphoserine.

Belongs to the DP1 family. In terms of tissue distribution, expressed in circumvallate papillae and testis.

The protein resides in the endoplasmic reticulum membrane. Functionally, microtubule-binding protein required to ensure proper cell division and nuclear envelope reassembly by sequestering the endoplasmic reticulum away from chromosomes during mitosis. Probably acts by clearing the endoplasmic reticulum membrane from metaphase chromosomes. This is Receptor expression-enhancing protein 4 (REEP4) from Homo sapiens (Human).